Here is a 308-residue protein sequence, read N- to C-terminus: Olfactory receptor 6F1 (308 aa).

Residues Met1 to Leu25 lie on the Extracellular side of the membrane. Asn5 carries an N-linked (GlcNAc...) asparagine glycan. The helical transmembrane segment at Ser26–Leu46 threads the bilayer. Residues Met47–Gln54 lie on the Cytoplasmic side of the membrane. A helical transmembrane segment spans residues Leu55–Thr75. The Extracellular segment spans residues Ala76–Leu99. A disulfide bond links Cys97 and Cys189. Residues Gln100–Tyr120 traverse the membrane as a helical segment. At Asp121–Leu139 the chain is on the cytoplasmic side. A helical membrane pass occupies residues Leu140–Thr160. Topologically, residues Ala161–Leu197 are extracellular. A helical transmembrane segment spans residues Val198 to Ser217. Topologically, residues Tyr218 to Ala237 are cytoplasmic. Residues Phe238–Leu258 form a helical membrane-spanning segment. Residues His259–Ile271 lie on the Extracellular side of the membrane. The chain crosses the membrane as a helical span at residues Lys272–Leu292. Topologically, residues Arg293–Lys308 are cytoplasmic.

This sequence belongs to the G-protein coupled receptor 1 family.

Its subcellular location is the cell membrane. In terms of biological role, odorant receptor. This chain is Olfactory receptor 6F1 (OR6F1), found in Homo sapiens (Human).